The sequence spans 155 residues: MAKLAVIRIRGRVNVKRPVRDTLAMLRLHRVNHCVIVDDTPSYLGMLQKAKDYITWGEINAETLAKLIRKRGKLIGNKPVTDEYVKEKLGMTIEEFAQKVINGEMSLKDLPNLKPVFRLHPPRGGFKGSKKRSFQEGGALGYRGEKINELIERML.

It belongs to the universal ribosomal protein uL30 family. As to quaternary structure, part of the 50S ribosomal subunit.

The polypeptide is Large ribosomal subunit protein uL30 (Pyrococcus horikoshii (strain ATCC 700860 / DSM 12428 / JCM 9974 / NBRC 100139 / OT-3)).